Reading from the N-terminus, the 266-residue chain is uncharacterized protein (266 aa).

Belongs to the chlamydial CPn_0087/CT_309/TC_0583 family.

This is an uncharacterized protein from Chlamydia pneumoniae (Chlamydophila pneumoniae).